A 616-amino-acid chain; its full sequence is Protein phosphatase EYA4 (616 aa).

Met-1 carries the post-translational modification N-acetylmethionine. Disordered stretches follow at residues 1-66, 186-211, and 277-345; these read MEDT…VTTN, SQTQSPLQSGCLSYSPGFSTPQPGQT, and ADGT…DSDL. Residues Lys-14 and Lys-52 each participate in a glycyl lysine isopeptide (Lys-Gly) (interchain with G-Cter in SUMO2) cross-link. Residues 56 to 66 are compositionally biased toward low complexity; the sequence is SGLSSTSVTTN. A compositionally biased stretch (polar residues) spans 277 to 311; the sequence is ADGTSSSTSTYQLQESLQGLTSQPGEFDTVQSPST. Position 338 is a phosphoserine (Ser-338). The active-site Nucleophile is Asp-352. 3 residues coordinate Mg(2+): Asp-352, Asp-354, and Asp-580. Asp-354 acts as the Proton donor in catalysis.

It belongs to the HAD-like hydrolase superfamily. EYA family. Interacts with SIX3; translocates EYA4 from the cytoplasm to the nucleus and promotes activation of their target genes. Mg(2+) is required as a cofactor. In the embryo, expressed mainly in the craniofacial mesenchyme, dermamyotome and limb.

It localises to the cytoplasm. The protein resides in the nucleus. It catalyses the reaction O-phospho-L-tyrosyl-[protein] + H2O = L-tyrosyl-[protein] + phosphate. Functionally, tyrosine phosphatase that specifically dephosphorylates 'Tyr-142' of histone H2AX (H2AXY142ph). 'Tyr-142' phosphorylation of histone H2AX plays a central role in DNA repair and acts as a mark that distinguishes between apoptotic and repair responses to genotoxic stress. Promotes efficient DNA repair by dephosphorylating H2AX, promoting the recruitment of DNA repair complexes containing MDC1. Its function as histone phosphatase probably explains its role in transcription regulation during organogenesis. May be involved in development of the eye. This is Protein phosphatase EYA4 (Eya4) from Mus musculus (Mouse).